An 883-amino-acid chain; its full sequence is MASNLLRFPLPPPSSLHIRPSKFLVNRCFPRLRRSRIRRHCSRPFFLVSNSVEISTQSFESTESSIESVKSITSDTPILLDVSGMMCGGCVARVKSVLMSDDRVASAVVNMLTETAAVKFKPEVEVTADTAESLAKRLTESGFEAKRRVSGMGVAENVKKWKEMVSKKEDLLVKSRNRVAFAWTLVALCCGSHTSHILHSLGIHIAHGGIWDLLHNSYVKGGLAVGALLGPGRELLFDGIKAFGKRSPNMNSLVGLGSMAAFSISLISLVNPELEWDASFFDEPVMLLGFVLLGRSLEERAKLQASTDMNELLSLISTQSRLVITSSDNNTPVDSVLSSDSICINVSVDDIRVGDSLLVLPGETFPVDGSVLAGRSVVDESMLTGESLPVFKEEGCSVSAGTINWDGPLRIKASSTGSNSTISKIVRMVEDAQGNAAPVQRLADAIAGPFVYTIMSLSAMTFAFWYYVGSHIFPDVLLNDIAGPDGDALALSLKLAVDVLVVSCPCALGLATPTAILIGTSLGAKRGYLIRGGDVLERLASIDCVALDKTGTLTEGRPVVSGVASLGYEEQEVLKMAAAVEKTATHPIAKAIVNEAESLNLKTPETRGQLTEPGFGTLAEIDGRFVAVGSLEWVSDRFLKKNDSSDMVKLESLLDHKLSNTSSTSRYSKTVVYVGREGEGIIGAIAISDCLRQDAEFTVARLQEKGIKTVLLSGDREGAVATVAKNVGIKSESTNYSLSPEKKFEFISNLQSSGHRVAMVGDGINDAPSLAQADVGIALKIEAQENAASNAASVILVRNKLSHVVDALSLAQATMSKVYQNLAWAIAYNVISIPIAAGVLLPQYDFAMTPSLSGGLMALSSIFVVSNSLLLQLHKSETSKNSL.

Residues 1–65 constitute a chloroplast transit peptide; that stretch reads MASNLLRFPL…TQSFESTESS (65 aa). The HMA domain occupies 76–146; sequence TPILLDVSGM…RLTESGFEAK (71 aa). The Cu cation site is built by Cys87 and Cys90. Transmembrane regions (helical) follow at residues 179–199, 209–229, 250–270, 274–294, 445–465, and 499–519; these read VAFAWTLVALCCGSHTSHILH, GIWDLLHNSYVKGGLAVGALL, MNSLVGLGSMAAFSISLISLV, LEWDASFFDEPVMLLGFVLLG, AIAGPFVYTIMSLSAMTFAFW, and VLVVSCPCALGLATPTAILIG. Asp548 serves as the catalytic 4-aspartylphosphate intermediate. 761-768 serves as a coordination point for ATP; sequence GDGINDAP. Asp762 and Asp766 together coordinate Mg(2+). Transmembrane regions (helical) follow at residues 822-842 and 846-866; these read LAWAIAYNVISIPIAAGVLLP and FAMTPSLSGGLMALSSIFVVS.

Belongs to the cation transport ATPase (P-type) (TC 3.A.3) family. Type IB subfamily. As to expression, expressed in the shoots only and not in the roots.

The protein resides in the plastid. It is found in the chloroplast thylakoid membrane. It catalyses the reaction Cu(2+)(in) + ATP + H2O = Cu(2+)(out) + ADP + phosphate + H(+). In terms of biological role, mediates copper transfer across the chloroplast thylakoid membrane. Required for copper delivery into the thylakoids lumen, which is essential for the function of copper proteins. The sequence is that of Copper-transporting ATPase PAA2, chloroplastic (PAA2) from Arabidopsis thaliana (Mouse-ear cress).